Here is a 140-residue protein sequence, read N- to C-terminus: UPF0654 protein C22G7.11c (140 aa).

Disordered regions lie at residues 1–88 and 110–140; these read MPDP…DPMK and YKAT…ETQA. Residues 24-33 are compositionally biased toward basic and acidic residues; sequence AKERAEDYIE. A compositionally biased stretch (polar residues) spans 34–44; that stretch reads SHSSGQETGDY. The segment covering 54–71 has biased composition (acidic residues); that stretch reads DYEDLGDYDEDADFDNEE.

Belongs to the UPF0654 (con-6) family.

The protein is UPF0654 protein C22G7.11c of Schizosaccharomyces pombe (strain 972 / ATCC 24843) (Fission yeast).